The primary structure comprises 121 residues: MSWNHNRRWKDFQALVNAEDYFAFFELPYDPRVVNVNRLHILRKFAQYLAPLEHFQGSEEEWLEQARQALEKAYQTFLTSTPQQEKLFRVFQDYGCPDPVGGCAGCSSSGERGECSPGIPA.

It belongs to the NifW family. In terms of assembly, homotrimer; associates with NifD.

May protect the nitrogenase Fe-Mo protein from oxidative damage. In Synechococcus sp. (strain JA-2-3B'a(2-13)) (Cyanobacteria bacterium Yellowstone B-Prime), this protein is Nitrogenase-stabilizing/protective protein NifW.